We begin with the raw amino-acid sequence, 600 residues long: MSGKEVEGVVSPADQQQPAVPEVTDITLEAARKQKIHNLKLKTACLSNEEYVQDLHVSEWSETQKQKLQAAHEKAHELLASVEGGTKWSLTEAYDIKKLMRVCGLEMSVRELYKPEDKPQFMEIVALKKTMNELKQHHNKTRTVSFTGMIDNAIAKLEKIEDELRRSQLDASEMAQVPVAALKNIEDTMNVAVVQTALLGNEEQIKAQLAAVEKANEIRNVAIADGEMAIAEEQYYIKAQLLEHLVELVADKFRIIGQTEDENKSFSKIHEVQKKSFQESASIKDAKRRLKQHCEDDLRNLHDAIQKADLEDAEAMKRFATQKEKSERFIHENLDKQDEAWRRIQELERVLQRLGTERFEEVKRRIEENDREEKRKVEYQQFLDVCGQHKKLLELSVYNCDLALRCMGMLEEIVAEGCSAVKSRHDKTNDELSDLRLQVHQEYLEAFRRLYKTLGQLVYKKEKRLEEIDRNIRTTHIQLEFAIETFDPNAKLHSDKKKDLYKLRAQVEEELEMLKDKMAQALEMFGPTEDALNQAGIDFVHPAEEVESGNMDRRSKMVEYRAHLAKQEEVKIAAEREELKRSKMLQSQQYRGRTMPQITQ.

Residues 335-355 form a calmodulin-binding region; sequence DKQDEAWRRIQELERVLQRLG.

Heterodimer of a 69 kDa and a 73 kDa protein.

The protein localises to the cell projection. It is found in the cilium. Its subcellular location is the flagellum. It localises to the cytoplasm. The protein resides in the cytoskeleton. In terms of biological role, major component of the paraflagellar rod (PFR). The PFR is a highly ordered lattices of fibrous proteins that are located inside the flagellum and assume a fixed orientation with respect to the microtubular axoneme. In Trypanosoma brucei brucei, this protein is 69 kDa paraflagellar rod protein (PFRA).